Reading from the N-terminus, the 416-residue chain is Kynureninase (416 aa).

Residues Thr-97, Ser-98, 129–132 (FPTD), Thr-172, Asp-201, His-204, and Tyr-226 contribute to the pyridoxal 5'-phosphate site. The residue at position 227 (Lys-227) is an N6-(pyridoxal phosphate)lysine. Pyridoxal 5'-phosphate contacts are provided by Trp-256 and Thr-282.

Belongs to the kynureninase family. Homodimer. Pyridoxal 5'-phosphate is required as a cofactor.

It catalyses the reaction L-kynurenine + H2O = anthranilate + L-alanine + H(+). The enzyme catalyses 3-hydroxy-L-kynurenine + H2O = 3-hydroxyanthranilate + L-alanine + H(+). Its pathway is amino-acid degradation; L-kynurenine degradation; L-alanine and anthranilate from L-kynurenine: step 1/1. It functions in the pathway cofactor biosynthesis; NAD(+) biosynthesis; quinolinate from L-kynurenine: step 2/3. Functionally, catalyzes the cleavage of L-kynurenine (L-Kyn) and L-3-hydroxykynurenine (L-3OHKyn) into anthranilic acid (AA) and 3-hydroxyanthranilic acid (3-OHAA), respectively. The sequence is that of Kynureninase from Pseudomonas fluorescens.